The following is a 698-amino-acid chain: Effector protein AvrPphDPgy (698 aa).

Positions 1 to 15 (MNPLRSIQHNITTPP) are enriched in polar residues. Disordered regions lie at residues 1-36 (MNPL…HPKR) and 171-200 (VDSS…DSDS). Residues 172-181 (DSSSPLLSSP) show a composition bias toward low complexity.

The protein localises to the secreted. In terms of biological role, effector protein involved in non-host recognition. This Pseudomonas savastanoi pv. glycinea (Pseudomonas syringae pv. glycinea) protein is Effector protein AvrPphDPgy (avrPphDPgy).